The sequence spans 762 residues: Polyribonucleotide nucleotidyltransferase (762 aa).

Positions 531 and 537 each coordinate Mg(2+). The region spanning 597-656 is the KH domain; sequence PRVTTIKVPVDKIGEVIGPKGKVINSITEETGAQISIEDDGTVFVGATDGPSAQAAIDKI. An S1 motif domain is found at 668-737; the sequence is GERFLGTVVK…KRGKISLVLV (70 aa).

This sequence belongs to the polyribonucleotide nucleotidyltransferase family. Mg(2+) serves as cofactor.

The protein localises to the cytoplasm. It carries out the reaction RNA(n+1) + phosphate = RNA(n) + a ribonucleoside 5'-diphosphate. Involved in mRNA degradation. Catalyzes the phosphorolysis of single-stranded polyribonucleotides processively in the 3'- to 5'-direction. In Mycobacterium marinum (strain ATCC BAA-535 / M), this protein is Polyribonucleotide nucleotidyltransferase.